The sequence spans 207 residues: Ion-translocating oxidoreductase complex subunit G (207 aa).

The helical transmembrane segment at 11–31 (GILLGFIALLCTIISAGIYFL) threads the bilayer. An FMN phosphoryl threonine modification is found at T175.

Belongs to the RnfG family. The complex is composed of six subunits: RnfA, RnfB, RnfC, RnfD, RnfE and RnfG. FMN serves as cofactor.

The protein localises to the cell inner membrane. Functionally, part of a membrane-bound complex that couples electron transfer with translocation of ions across the membrane. In Haemophilus influenzae (strain PittEE), this protein is Ion-translocating oxidoreductase complex subunit G.